Reading from the N-terminus, the 409-residue chain is Sex-determination protein fem-3 (409 aa).

In terms of assembly, component of a complex containing fem-1, fem-2 and fem-3. Interacts with fem-1 and fem-2 (via N-terminus). Part of a E3 ubiquitin-protein ligase complex, at least composed of cul-2, elc-1, tra-1, fem-1, fem-2 and fem-3; mediates the ubiquitination and subsequent proteasomal degradation of tra-1. Interacts with sel-10. Interacts with tra-2.

Required for male development. In XO (male) animals, fem-3 directs male differentiation in all tissues. In XX (hermaphrodite animals), it specifies the first 80 or so germ cells to be sperm. Negatively regulates male development when bound to tra-2. The polypeptide is Sex-determination protein fem-3 (Caenorhabditis briggsae).